The chain runs to 282 residues: Succinate dehydrogenase [ubiquinone] iron-sulfur subunit, mitochondrial (282 aa).

Residues 1 to 30 (MAAVVGVSLKRGFSATALGRVGLQFQACRE) constitute a mitochondrion transit peptide. Lysine 53 and lysine 57 each carry N6-acetyllysine. The 2Fe-2S ferredoxin-type domain maps to 56-135 (DKPRMQTYKV…VSKIYPLPHM (80 aa)). [2Fe-2S] cluster is bound by residues cysteine 95, cysteine 100, cysteine 103, and cysteine 115. Residues 148-220 (FYAQYKSIEP…PAVLMQAYRW (73 aa)) form an interaction with SDHAF1 region. One can recognise a 4Fe-4S ferredoxin-type domain in the interval 178-208 (DREKLDGLYECILCACCSTSCPSYWWNGDKY). Residues cysteine 188, cysteine 191, and cysteine 194 each coordinate [4Fe-4S] cluster. Cysteine 198 contacts [3Fe-4S] cluster. Tryptophan 203 lines the a ubiquinone pocket. [3Fe-4S] cluster is bound by residues cysteine 245 and cysteine 251. Position 255 (cysteine 255) interacts with [4Fe-4S] cluster.

Belongs to the succinate dehydrogenase/fumarate reductase iron-sulfur protein family. Component of complex II composed of four subunits: the flavoprotein (FP) SDHA, iron-sulfur protein (IP) SDHB, and a cytochrome b560 composed of SDHC and SDHD. Interacts with SDHAF1; the interaction is required for iron-sulfur cluster incorporation into SDHB. [2Fe-2S] cluster is required as a cofactor. [3Fe-4S] cluster serves as cofactor. Requires [4Fe-4S] cluster as cofactor.

It is found in the mitochondrion inner membrane. It carries out the reaction a quinone + succinate = fumarate + a quinol. It catalyses the reaction (R)-malate + a quinone = enol-oxaloacetate + a quinol. The catalysed reaction is (S)-malate + a quinone = enol-oxaloacetate + a quinol. The protein operates within carbohydrate metabolism; tricarboxylic acid cycle; fumarate from succinate (eukaryal route): step 1/1. Enol-oxaloacetate inhibits the succinate dehydrogenase activity. In terms of biological role, iron-sulfur protein (IP) subunit of the succinate dehydrogenase complex (mitochondrial respiratory chain complex II), responsible for transferring electrons from succinate to ubiquinone (coenzyme Q). SDH also oxidizes malate to the non-canonical enol form of oxaloacetate, enol-oxaloacetate. Enol-oxaloacetate, which is a potent inhibitor of the succinate dehydrogenase activity, is further isomerized into keto-oxaloacetate. The sequence is that of Succinate dehydrogenase [ubiquinone] iron-sulfur subunit, mitochondrial (Sdhb) from Rattus norvegicus (Rat).